The following is a 473-amino-acid chain: Photosystem II CP43 reaction center protein (473 aa).

Positions 1–14 are excised as a propeptide; sequence MKILYSLRRYFHVE. An N-acetylthreonine modification is found at Thr-15. Residue Thr-15 is modified to Phosphothreonine. 5 helical membrane passes run 69–93, 134–155, 178–200, 255–275, and 291–312; these read LFEV…PHLA, LIGP…KDKN, KAIW…RKIT, KPFA…LSYS, and WFNN…ASQA. Glu-367 is a [CaMn4O5] cluster binding site. Residues 447–471 traverse the membrane as a helical segment; it reads RARAAAAGFEKGIDRDSEPVLYMEP.

The protein belongs to the PsbB/PsbC family. PsbC subfamily. PSII is composed of 1 copy each of membrane proteins PsbA, PsbB, PsbC, PsbD, PsbE, PsbF, PsbH, PsbI, PsbJ, PsbK, PsbL, PsbM, PsbT, PsbX, PsbY, PsbZ, Psb30/Ycf12, at least 3 peripheral proteins of the oxygen-evolving complex and a large number of cofactors. It forms dimeric complexes. It depends on Binds multiple chlorophylls and provides some of the ligands for the Ca-4Mn-5O cluster of the oxygen-evolving complex. It may also provide a ligand for a Cl- that is required for oxygen evolution. PSII binds additional chlorophylls, carotenoids and specific lipids. as a cofactor.

Its subcellular location is the plastid. It localises to the chloroplast thylakoid membrane. In terms of biological role, one of the components of the core complex of photosystem II (PSII). It binds chlorophyll and helps catalyze the primary light-induced photochemical processes of PSII. PSII is a light-driven water:plastoquinone oxidoreductase, using light energy to abstract electrons from H(2)O, generating O(2) and a proton gradient subsequently used for ATP formation. This chain is Photosystem II CP43 reaction center protein, found in Chara vulgaris (Common stonewort).